A 420-amino-acid chain; its full sequence is Probable pectate lyase C (420 aa).

Residues 1-20 (MKLSEPLLVSLAAFSQAVTA) form the signal peptide. Residues Asn-49, Asn-165, and Asn-202 are each glycosylated (N-linked (GlcNAc...) asparagine). Residue Arg-205 is part of the active site. Residues 262-297 (NANFHGYVQNNYYDPDKDGQLDGFELGVSSSNYGGM) form the EF-hand domain. Residues Asp-275, Asp-277, Asp-279, Gln-281, and Glu-286 each coordinate Ca(2+). Residues 358 to 396 (TMGGPGTLNGGTPAKDTDGDGIPDEAEKQLGTDPNTNDS) are disordered. N-linked (GlcNAc...) asparagine glycosylation is present at Asn-394.

It belongs to the polysaccharide lyase 1 family. Requires Ca(2+) as cofactor.

Its subcellular location is the secreted. It carries out the reaction Eliminative cleavage of (1-&gt;4)-alpha-D-galacturonan to give oligosaccharides with 4-deoxy-alpha-D-galact-4-enuronosyl groups at their non-reducing ends.. Pectinolytic enzyme consist of four classes of enzymes: pectin lyase, polygalacturonase, pectin methylesterase and rhamnogalacturonase. Among pectinolytic enzymes, pectin lyase is the most important in depolymerization of pectin, since it cleaves internal glycosidic bonds of highly methylated pectins. Favors pectate, the anion, over pectin, the methyl ester. In Aspergillus fumigatus (strain ATCC MYA-4609 / CBS 101355 / FGSC A1100 / Af293) (Neosartorya fumigata), this protein is Probable pectate lyase C (plyC).